The primary structure comprises 185 residues: ATP synthase subunit b, chloroplastic (185 aa).

Residues 7–29 traverse the membrane as a helical segment; the sequence is SFVYLVGHCPFAGSFAFNTDILA.

Belongs to the ATPase B chain family. As to quaternary structure, F-type ATPases have 2 components, F(1) - the catalytic core - and F(0) - the membrane proton channel. F(1) has five subunits: alpha(3), beta(3), gamma(1), delta(1), epsilon(1). F(0) has four main subunits: a(1), b(1), b'(1) and c(10-14). The alpha and beta chains form an alternating ring which encloses part of the gamma chain. F(1) is attached to F(0) by a central stalk formed by the gamma and epsilon chains, while a peripheral stalk is formed by the delta, b and b' chains.

Its subcellular location is the plastid. It is found in the chloroplast thylakoid membrane. In terms of biological role, f(1)F(0) ATP synthase produces ATP from ADP in the presence of a proton or sodium gradient. F-type ATPases consist of two structural domains, F(1) containing the extramembraneous catalytic core and F(0) containing the membrane proton channel, linked together by a central stalk and a peripheral stalk. During catalysis, ATP synthesis in the catalytic domain of F(1) is coupled via a rotary mechanism of the central stalk subunits to proton translocation. Component of the F(0) channel, it forms part of the peripheral stalk, linking F(1) to F(0). This is ATP synthase subunit b, chloroplastic from Dioscorea elephantipes (Elephant's foot yam).